A 473-amino-acid polypeptide reads, in one-letter code: Siroheme synthase (473 aa).

The tract at residues 1-222 (MNTQPHHSSP…GDESRADARL (222 aa)) is precorrin-2 dehydrogenase /sirohydrochlorin ferrochelatase. NAD(+) is bound by residues 37 to 38 (EI) and 58 to 59 (EK). Positions 233–473 (GEVWLVGAGP…QVVRHRVVSP (241 aa)) are uroporphyrinogen-III C-methyltransferase. Pro242 serves as a coordination point for S-adenosyl-L-methionine. Catalysis depends on Asp265, which acts as the Proton acceptor. Catalysis depends on Lys287, which acts as the Proton donor. Residues 318 to 320 (GGD), Ile323, 348 to 349 (SA), Met401, and Gly430 contribute to the S-adenosyl-L-methionine site.

It in the N-terminal section; belongs to the precorrin-2 dehydrogenase / sirohydrochlorin ferrochelatase family. In the C-terminal section; belongs to the precorrin methyltransferase family.

The enzyme catalyses uroporphyrinogen III + 2 S-adenosyl-L-methionine = precorrin-2 + 2 S-adenosyl-L-homocysteine + H(+). It catalyses the reaction precorrin-2 + NAD(+) = sirohydrochlorin + NADH + 2 H(+). The catalysed reaction is siroheme + 2 H(+) = sirohydrochlorin + Fe(2+). It functions in the pathway cofactor biosynthesis; adenosylcobalamin biosynthesis; precorrin-2 from uroporphyrinogen III: step 1/1. The protein operates within cofactor biosynthesis; adenosylcobalamin biosynthesis; sirohydrochlorin from precorrin-2: step 1/1. Its pathway is porphyrin-containing compound metabolism; siroheme biosynthesis; precorrin-2 from uroporphyrinogen III: step 1/1. It participates in porphyrin-containing compound metabolism; siroheme biosynthesis; siroheme from sirohydrochlorin: step 1/1. It functions in the pathway porphyrin-containing compound metabolism; siroheme biosynthesis; sirohydrochlorin from precorrin-2: step 1/1. Multifunctional enzyme that catalyzes the SAM-dependent methylations of uroporphyrinogen III at position C-2 and C-7 to form precorrin-2 via precorrin-1. Then it catalyzes the NAD-dependent ring dehydrogenation of precorrin-2 to yield sirohydrochlorin. Finally, it catalyzes the ferrochelation of sirohydrochlorin to yield siroheme. The polypeptide is Siroheme synthase (Gluconobacter oxydans (strain 621H) (Gluconobacter suboxydans)).